Here is a 2311-residue protein sequence, read N- to C-terminus: Protein Ycf2 (2311 aa).

1652–1659 (GSIGTGRS) is an ATP binding site.

The protein belongs to the Ycf2 family.

It localises to the plastid. The protein localises to the chloroplast stroma. In terms of biological role, probable ATPase of unknown function. Its presence in a non-photosynthetic plant (Epifagus virginiana) and experiments in tobacco indicate that it has an essential function which is probably not related to photosynthesis. The protein is Protein Ycf2 of Lemna minor (Common duckweed).